We begin with the raw amino-acid sequence, 213 residues long: tRNA (guanine-N(7)-)-methyltransferase (213 aa).

S-adenosyl-L-methionine is bound by residues aspartate 40, glutamate 65, asparagine 92, and aspartate 118. Aspartate 118 is an active-site residue. Substrate is bound by residues lysine 122 and aspartate 154.

Belongs to the class I-like SAM-binding methyltransferase superfamily. TrmB family.

The enzyme catalyses guanosine(46) in tRNA + S-adenosyl-L-methionine = N(7)-methylguanosine(46) in tRNA + S-adenosyl-L-homocysteine. It functions in the pathway tRNA modification; N(7)-methylguanine-tRNA biosynthesis. Catalyzes the formation of N(7)-methylguanine at position 46 (m7G46) in tRNA. The polypeptide is tRNA (guanine-N(7)-)-methyltransferase (Synechococcus elongatus (strain ATCC 33912 / PCC 7942 / FACHB-805) (Anacystis nidulans R2)).